Reading from the N-terminus, the 331-residue chain is Zinc finger CW-type PWWP domain protein 2 homolog (331 aa).

A CW-type zinc finger spans residues 9–64; that stretch reads EFVHRTWVQCENESCLKWRLLSPAAAAAVNPSEPWYCFMNTDPSYSSCSVSEEDFP. Positions 18, 23, 45, and 56 each coordinate Zn(2+). Residues 83-147 form the PWWP domain; it reads LGSLVLVKLR…AAFVGHFSLT (65 aa). Residues 264-295 form a disordered region; the sequence is IQEPTAREDESQGEQLSQCSPESPTGSPFQSY. Polar residues predominate over residues 276 to 293; the sequence is GEQLSQCSPESPTGSPFQ.

Histone methylation reader which binds to non-methylated (H3K4me0), monomethylated (H3K4me1), dimethylated (H3K4me2) and trimethylated (H3K4me3) 'Lys-4' on histone H3. The order of binding preference is H3K4me3 &gt; H3K4me2 &gt; H3K4me1 &gt; H3K4me0. In Mus musculus (Mouse), this protein is Zinc finger CW-type PWWP domain protein 2 homolog (Zcwpw2).